Here is a 492-residue protein sequence, read N- to C-terminus: GTPase Der (492 aa).

2 consecutive EngA-type G domains span residues 3–167 (FTLA…EKFE) and 207–382 (LQVA…DVWN). Residues 9–16 (GRPNVGKS), 56–60 (DSAGL), 119–122 (NKSE), 213–220 (GRPNAGKS), 260–264 (DTAGM), and 325–328 (NKWD) each bind GTP. Residues 383–469 (RRVPTAALNR…RLTLRGQGDK (87 aa)) form the KH-like domain. The disordered stretch occupies residues 461–492 (LTLRGQGDKNPYKGKKKSTPSRLRKHLEGRKS). A compositionally biased stretch (basic residues) spans 472–492 (YKGKKKSTPSRLRKHLEGRKS).

It belongs to the TRAFAC class TrmE-Era-EngA-EngB-Septin-like GTPase superfamily. EngA (Der) GTPase family. Associates with the 50S ribosomal subunit.

GTPase that plays an essential role in the late steps of ribosome biogenesis. The chain is GTPase Der from Ruegeria sp. (strain TM1040) (Silicibacter sp.).